Consider the following 382-residue polypeptide: Succinyl-diaminopimelate desuccinylase (382 aa).

Zn(2+) is bound at residue His72. Residue Asp74 is part of the active site. Residue Asp105 coordinates Zn(2+). The active-site Proton acceptor is Glu139. Residues Glu140, Glu168, and His354 each coordinate Zn(2+).

The protein belongs to the peptidase M20A family. DapE subfamily. Homodimer. Requires Zn(2+) as cofactor. It depends on Co(2+) as a cofactor.

The enzyme catalyses N-succinyl-(2S,6S)-2,6-diaminopimelate + H2O = (2S,6S)-2,6-diaminopimelate + succinate. The protein operates within amino-acid biosynthesis; L-lysine biosynthesis via DAP pathway; LL-2,6-diaminopimelate from (S)-tetrahydrodipicolinate (succinylase route): step 3/3. Its function is as follows. Catalyzes the hydrolysis of N-succinyl-L,L-diaminopimelic acid (SDAP), forming succinate and LL-2,6-diaminopimelate (DAP), an intermediate involved in the bacterial biosynthesis of lysine and meso-diaminopimelic acid, an essential component of bacterial cell walls. This Shewanella amazonensis (strain ATCC BAA-1098 / SB2B) protein is Succinyl-diaminopimelate desuccinylase.